A 398-amino-acid polypeptide reads, in one-letter code: GTPase Obg (398 aa).

An Obg domain is found at 1-159; the sequence is MKFVDEAPIS…RNLKLELKVL (159 aa). Residues 128–148 form a disordered region; sequence TRFKSSTNRVPRKTTPGTEGE. The region spanning 160–333 is the OBG-type G domain; the sequence is ADVGMLGLPN…LSGKIMDHLE (174 aa). GTP-binding positions include 166–173, 191–195, 213–216, 283–286, and 314–316; these read GLPNAGKS, FTTLV, DIPG, NKID, and SAL. Positions 173 and 193 each coordinate Mg(2+).

This sequence belongs to the TRAFAC class OBG-HflX-like GTPase superfamily. OBG GTPase family. Monomer. Mg(2+) is required as a cofactor.

It is found in the cytoplasm. In terms of biological role, an essential GTPase which binds GTP, GDP and possibly (p)ppGpp with moderate affinity, with high nucleotide exchange rates and a fairly low GTP hydrolysis rate. Plays a role in control of the cell cycle, stress response, ribosome biogenesis and in those bacteria that undergo differentiation, in morphogenesis control. The chain is GTPase Obg from Cellvibrio japonicus (strain Ueda107) (Pseudomonas fluorescens subsp. cellulosa).